The chain runs to 398 residues: Argininosuccinate synthase (398 aa).

10 to 18 (AYSGGLDTS) is a binding site for ATP. Y87 is an L-citrulline binding site. Residue G117 participates in ATP binding. Positions 119, 123, and 124 each coordinate L-aspartate. N123 contacts L-citrulline. Residues R127, S175, E260, and Y272 each contribute to the L-citrulline site.

The protein belongs to the argininosuccinate synthase family. Type 1 subfamily. In terms of assembly, homotetramer.

The protein localises to the cytoplasm. It carries out the reaction L-citrulline + L-aspartate + ATP = 2-(N(omega)-L-arginino)succinate + AMP + diphosphate + H(+). It functions in the pathway amino-acid biosynthesis; L-arginine biosynthesis; L-arginine from L-ornithine and carbamoyl phosphate: step 2/3. The sequence is that of Argininosuccinate synthase from Lactococcus lactis subsp. lactis (strain IL1403) (Streptococcus lactis).